The primary structure comprises 105 residues: Heat shock protein HspQ (105 aa).

The tract at residues 74–105 (SSELQDERPEQPSMDELAQTIRKQRQAPRLRN) is disordered. Residues 95–105 (RKQRQAPRLRN) are compositionally biased toward basic residues.

This sequence belongs to the HspQ family.

The protein localises to the cytoplasm. Involved in the degradation of certain denaturated proteins, including DnaA, during heat shock stress. The sequence is that of Heat shock protein HspQ from Shigella dysenteriae serotype 1 (strain Sd197).